A 223-amino-acid polypeptide reads, in one-letter code: Ribose-5-phosphate isomerase A (223 aa).

Residues 32 to 35, 85 to 88, and 98 to 101 contribute to the substrate site; these read TGST, DGAD, and KGGG. Glu-107 serves as the catalytic Proton acceptor. A substrate-binding site is contributed by Lys-125.

It belongs to the ribose 5-phosphate isomerase family. Homodimer.

The catalysed reaction is aldehydo-D-ribose 5-phosphate = D-ribulose 5-phosphate. The protein operates within carbohydrate degradation; pentose phosphate pathway; D-ribose 5-phosphate from D-ribulose 5-phosphate (non-oxidative stage): step 1/1. Functionally, catalyzes the reversible conversion of ribose-5-phosphate to ribulose 5-phosphate. The polypeptide is Ribose-5-phosphate isomerase A (Stutzerimonas stutzeri (strain A1501) (Pseudomonas stutzeri)).